Here is a 449-residue protein sequence, read N- to C-terminus: Cryptochrome DASH (449 aa).

Residues Arg-15–Leu-147 enclose the Photolyase/cryptochrome alpha/beta domain.

This sequence belongs to the DNA photolyase class-1 family. The cofactor is FAD. It depends on (6R)-5,10-methylene-5,6,7,8-tetrahydrofolate as a cofactor.

Functionally, may have a photoreceptor function. Binds DNA; probably functions as a transcriptional repressor. In Idiomarina loihiensis (strain ATCC BAA-735 / DSM 15497 / L2-TR), this protein is Cryptochrome DASH (cry).